The chain runs to 381 residues: DNA repair protein RAD51 homolog 3 (381 aa).

Residues 1 to 24 are disordered; that stretch reads MDEDINKDTNNNNNTTDSNNNNNN. A compositionally biased stretch (low complexity) spans 8–24; it reads DTNNNNNTTDSNNNNNN. Residue 89–96 coordinates ATP; sequence GVPGIGKT. A disordered region spans residues 313 to 381; it reads GFNHPPPLNP…NDENEMYIEN (69 aa). Residues 323 to 377 adopt a coiled-coil conformation; that stretch reads EDQEQEKEKEKRKKKNNNNNNNNNNNNNNNNNNNNNNNNNNNNNNNNKNNDENEM. Low complexity predominate over residues 339–370; sequence NNNNNNNNNNNNNNNNNNNNNNNNNNNNNNNK.

It belongs to the RecA family. RAD51 subfamily.

The protein localises to the nucleus. Its function is as follows. Involved in the homologous recombination repair (HRR) pathway of double-stranded DNA breaks arising during DNA replication or induced by DNA-damaging agents. This is DNA repair protein RAD51 homolog 3 (rad51c) from Dictyostelium discoideum (Social amoeba).